A 347-amino-acid chain; its full sequence is S-adenosylmethionine:tRNA ribosyltransferase-isomerase (347 aa).

This sequence belongs to the QueA family. In terms of assembly, monomer.

It is found in the cytoplasm. It carries out the reaction 7-aminomethyl-7-carbaguanosine(34) in tRNA + S-adenosyl-L-methionine = epoxyqueuosine(34) in tRNA + adenine + L-methionine + 2 H(+). The protein operates within tRNA modification; tRNA-queuosine biosynthesis. Its function is as follows. Transfers and isomerizes the ribose moiety from AdoMet to the 7-aminomethyl group of 7-deazaguanine (preQ1-tRNA) to give epoxyqueuosine (oQ-tRNA). The sequence is that of S-adenosylmethionine:tRNA ribosyltransferase-isomerase from Xylella fastidiosa (strain M23).